A 493-amino-acid chain; its full sequence is Glutamyl-tRNA(Gln) amidotransferase subunit A (493 aa).

Catalysis depends on charge relay system residues lysine 78 and serine 158. The active-site Acyl-ester intermediate is the serine 182.

This sequence belongs to the amidase family. GatA subfamily. As to quaternary structure, heterotrimer of A, B and C subunits.

It carries out the reaction L-glutamyl-tRNA(Gln) + L-glutamine + ATP + H2O = L-glutaminyl-tRNA(Gln) + L-glutamate + ADP + phosphate + H(+). Its function is as follows. Allows the formation of correctly charged Gln-tRNA(Gln) through the transamidation of misacylated Glu-tRNA(Gln) in organisms which lack glutaminyl-tRNA synthetase. The reaction takes place in the presence of glutamine and ATP through an activated gamma-phospho-Glu-tRNA(Gln). The chain is Glutamyl-tRNA(Gln) amidotransferase subunit A from Rickettsia rickettsii (strain Iowa).